The primary structure comprises 438 residues: V-type ATP synthase beta chain (438 aa).

This sequence belongs to the ATPase alpha/beta chains family.

Its function is as follows. Produces ATP from ADP in the presence of a proton gradient across the membrane. The V-type beta chain is a regulatory subunit. This chain is V-type ATP synthase beta chain, found in Chlamydia abortus (strain DSM 27085 / S26/3) (Chlamydophila abortus).